Reading from the N-terminus, the 892-residue chain is Translation initiation factor IF-2 (892 aa).

Disordered regions lie at residues 144-176 (QQRL…QKTE) and 189-298 (SNSV…SGAH). The span at 207–219 (LPRTVRPTPAARP) shows a compositional bias: low complexity. Positions 391 to 560 (PRPPVVTIMG…SIQAEVLELK (170 aa)) constitute a tr-type G domain. Residues 400-407 (GHVDHGKT), 446-450 (DTPGH), and 500-503 (SKID) each bind GTP.

Belongs to the TRAFAC class translation factor GTPase superfamily. Classic translation factor GTPase family. IF-2 subfamily.

It localises to the cytoplasm. One of the essential components for the initiation of protein synthesis. Protects formylmethionyl-tRNA from spontaneous hydrolysis and promotes its binding to the 30S ribosomal subunits. Also involved in the hydrolysis of GTP during the formation of the 70S ribosomal complex. The polypeptide is Translation initiation factor IF-2 (Xylella fastidiosa (strain M12)).